A 533-amino-acid polypeptide reads, in one-letter code: Calcium/calmodulin-dependent protein kinase type II (533 aa).

ATP-binding positions include 18–26 and Lys-41; that span reads LGKGAFSVV. Asp-134 acts as the Proton acceptor in catalysis. Residue Thr-284 is modified to Phosphothreonine; by autocatalysis. Polar residues-rich tracts occupy residues 316–345 and 377–391; these read TSDS…QPTS and PPST…SQTI. 2 disordered regions span residues 316–347 and 369–400; these read TSDS…TSPA and LLNK…EKAQ.

Belongs to the protein kinase superfamily. CAMK Ser/Thr protein kinase family. CaMK subfamily. Dodecamer. Subunits are tightly packed around a central ring-shaped scaffold with extensive contacts between the regulatory segment of one kinase and the catalytic domain of another enabling cooperative activation of a subunit by the adjacent molecule. Interacts with and phosphorylates daf-16; the interaction promotes daf-16 nuclear localization. Interacts with egl-2 and tir-1. Interacts with nsy-1. Requires Mg(2+) as cofactor.

The protein resides in the cytoplasm. Its subcellular location is the cell projection. It localises to the axon. The protein localises to the perikaryon. It catalyses the reaction L-seryl-[protein] + ATP = O-phospho-L-seryl-[protein] + ADP + H(+). The enzyme catalyses L-threonyl-[protein] + ATP = O-phospho-L-threonyl-[protein] + ADP + H(+). Its activity is regulated as follows. Ca(2+)/calmodulin binding removes an autoinhibitory regulatory segment located C-terminal to the kinase domain. This releases the catalytic activity of the enzyme and makes accessible a regulatory residue Thr-284. Phosphorylation of Thr-284 by another kinase domain within the oligomeric holoenzyme keeps CaMKII active in the absence of Ca(2+)/calmodulin by preventing the rebinding of the regulatory segment to the kinase domain and by increasing the affinity of calmodulin for the enzyme. Can respond to high-frequency Ca(2+) pulses to become Ca(2+) independent. Its function is as follows. Role in locomotion and neuronal cell fate specification. Required for the regulation of synaptic density, egg laying, defecation, and meiotic maturation. Required for viability under chronic osmotic stress in which it acts downstream of osr-1. Regulates the synaptic trafficking of glr-1. Bidirectional modulator of neurotransmitter release with negative modulatory effects mainly mediated via slo-1 activation. May suppress the functional response to an internal pacemaker, perhaps by modulating the activity of the IP3 receptor. The protein is Calcium/calmodulin-dependent protein kinase type II of Caenorhabditis briggsae.